The primary structure comprises 376 residues: Alcohol dehydrogenase 1 (376 aa).

S2 bears the N-acetylserine mark. 7 residues coordinate Zn(2+): C47, H68, C98, C101, C104, C112, and C176. Residues 201-206, D225, K230, 294-296, and R371 each bind NAD(+); these read GLGGVG and VGV.

Belongs to the zinc-containing alcohol dehydrogenase family. Class-I subfamily. As to quaternary structure, homodimer. The cofactor is Zn(2+).

The protein localises to the cytoplasm. It catalyses the reaction a primary alcohol + NAD(+) = an aldehyde + NADH + H(+). It carries out the reaction a secondary alcohol + NAD(+) = a ketone + NADH + H(+). The sequence is that of Alcohol dehydrogenase 1 (ADH1) from Gallus gallus (Chicken).